A 314-amino-acid polypeptide reads, in one-letter code: Putative S-adenosyl-L-methionine-dependent methyltransferase MMAR_5323 (314 aa).

S-adenosyl-L-methionine-binding positions include D132 and 161-162; that span reads DL.

It belongs to the UPF0677 family.

Its function is as follows. Exhibits S-adenosyl-L-methionine-dependent methyltransferase activity. In Mycobacterium marinum (strain ATCC BAA-535 / M), this protein is Putative S-adenosyl-L-methionine-dependent methyltransferase MMAR_5323.